A 178-amino-acid polypeptide reads, in one-letter code: Cytochrome b6-f complex iron-sulfur subunit (178 aa).

A helical membrane pass occupies residues 20–42; it reads LLTFGSVTGVALGALYPVANYFI. The Rieske domain occupies 65-161; the sequence is ASGWLSSHPE…VSVENDNVFV (97 aa). The [2Fe-2S] cluster site is built by Cys107, His109, Cys125, and His128. Cys112 and Cys127 are joined by a disulfide.

This sequence belongs to the Rieske iron-sulfur protein family. As to quaternary structure, the 4 large subunits of the cytochrome b6-f complex are cytochrome b6, subunit IV (17 kDa polypeptide, PetD), cytochrome f and the Rieske protein, while the 4 small subunits are PetG, PetL, PetM and PetN. The complex functions as a dimer. It depends on [2Fe-2S] cluster as a cofactor.

The protein resides in the cellular thylakoid membrane. The catalysed reaction is 2 oxidized [plastocyanin] + a plastoquinol + 2 H(+)(in) = 2 reduced [plastocyanin] + a plastoquinone + 4 H(+)(out). Its function is as follows. Component of the cytochrome b6-f complex, which mediates electron transfer between photosystem II (PSII) and photosystem I (PSI), cyclic electron flow around PSI, and state transitions. This chain is Cytochrome b6-f complex iron-sulfur subunit, found in Synechococcus sp. (strain CC9605).